The sequence spans 149 residues: Nucleoside diphosphate kinase (149 aa).

Lys9, Phe57, Arg85, Thr91, Arg102, and Asn112 together coordinate ATP. His115 functions as the Pros-phosphohistidine intermediate in the catalytic mechanism.

Belongs to the NDK family. As to quaternary structure, homotetramer. Mg(2+) is required as a cofactor.

It is found in the cytoplasm. The catalysed reaction is a 2'-deoxyribonucleoside 5'-diphosphate + ATP = a 2'-deoxyribonucleoside 5'-triphosphate + ADP. The enzyme catalyses a ribonucleoside 5'-diphosphate + ATP = a ribonucleoside 5'-triphosphate + ADP. Its function is as follows. Major role in the synthesis of nucleoside triphosphates other than ATP. The ATP gamma phosphate is transferred to the NDP beta phosphate via a ping-pong mechanism, using a phosphorylated active-site intermediate. This is Nucleoside diphosphate kinase from Staphylococcus aureus (strain MSSA476).